The sequence spans 155 residues: Large ribosomal subunit protein eL24 (155 aa).

The segment covering 97–129 (KPEIRKAKRDEKAKADKEKKKADKAARKADKAK) has biased composition (basic and acidic residues). A disordered region spans residues 97 to 155 (KPEIRKAKRDEKAKADKEKKKADKAARKADKAKSAATQASKISKQQAKGAFQKVAATSR). The span at 133–142 (TQASKISKQQ) shows a compositional bias: polar residues.

It belongs to the eukaryotic ribosomal protein eL24 family.

This chain is Large ribosomal subunit protein eL24 (RPL24), found in Eremothecium gossypii (strain ATCC 10895 / CBS 109.51 / FGSC 9923 / NRRL Y-1056) (Yeast).